A 284-amino-acid chain; its full sequence is Diaminopimelate epimerase (284 aa).

Residues Asn-14 and Asn-67 each contribute to the substrate site. Catalysis depends on Cys-76, which acts as the Proton donor. Residues 77–78, Asn-166, Asn-199, and 217–218 each bind substrate; these read GN and ER. The active-site Proton acceptor is the Cys-226. 227–228 is a substrate binding site; sequence GT.

Belongs to the diaminopimelate epimerase family. As to quaternary structure, homodimer.

It is found in the cytoplasm. The catalysed reaction is (2S,6S)-2,6-diaminopimelate = meso-2,6-diaminopimelate. It functions in the pathway amino-acid biosynthesis; L-lysine biosynthesis via DAP pathway; DL-2,6-diaminopimelate from LL-2,6-diaminopimelate: step 1/1. Catalyzes the stereoinversion of LL-2,6-diaminopimelate (L,L-DAP) to meso-diaminopimelate (meso-DAP), a precursor of L-lysine and an essential component of the bacterial peptidoglycan. This is Diaminopimelate epimerase from Bacillus pumilus (strain SAFR-032).